Consider the following 173-residue polypeptide: Putative metal-dependent hydrolase BCE_2729 (173 aa).

Zn(2+)-binding residues include His-65, His-156, and His-160.

It belongs to the metal hydrolase YfiT family. Homodimer. Requires Zn(2+) as cofactor.

It is found in the cytoplasm. Possible metal-dependent hydrolase. The sequence is that of Putative metal-dependent hydrolase BCE_2729 from Bacillus cereus (strain ATCC 10987 / NRS 248).